Consider the following 308-residue polypeptide: Protoheme IX farnesyltransferase (308 aa).

8 helical membrane-spanning segments follow: residues 20 to 40 (LLAYLALTKPRVIELLLVTAI), 50 to 70 (AIHPLLMLNTLVGGMMAATGA), 102 to 122 (NALALGLTLTVISFFWLWCAT), 124 to 144 (LLAGVLALVTVAFYVFVYTLW), 149 to 169 (TSQNVVWGGAAGCMPVMIGWS), 170 to 190 (AITGTIAWPALAMFAIIFFWT), 227 to 249 (LIYTWLTVAATLVLALATSWLYG), and 288 to 308 (YLAVVFCALAVDSVIALPTLH).

It belongs to the UbiA prenyltransferase family. Protoheme IX farnesyltransferase subfamily.

The protein localises to the cell membrane. It carries out the reaction heme b + (2E,6E)-farnesyl diphosphate + H2O = Fe(II)-heme o + diphosphate. Its pathway is porphyrin-containing compound metabolism; heme O biosynthesis; heme O from protoheme: step 1/1. Converts heme B (protoheme IX) to heme O by substitution of the vinyl group on carbon 2 of heme B porphyrin ring with a hydroxyethyl farnesyl side group. The chain is Protoheme IX farnesyltransferase from Mycobacterium bovis (strain BCG / Pasteur 1173P2).